The sequence spans 190 residues: Outer-membrane lipoprotein LolB (190 aa).

The signal sequence occupies residues Met1–Gly16. Cys17 carries N-palmitoyl cysteine lipidation. Cys17 carries the S-diacylglycerol cysteine lipid modification.

It belongs to the LolB family. Monomer.

It is found in the cell outer membrane. Its function is as follows. Plays a critical role in the incorporation of lipoproteins in the outer membrane after they are released by the LolA protein. The polypeptide is Outer-membrane lipoprotein LolB (Dechloromonas aromatica (strain RCB)).